The primary structure comprises 371 residues: Germination protease (371 aa).

Residues 1-16 constitute a propeptide that is removed on maturation; that stretch reads MEKQKLDLSAYQIRTD.

The protein belongs to the peptidase A25 family. As to quaternary structure, homotetramer. In terms of processing, autoproteolytically processed. The inactive tetrameric zymogen termed p46 autoprocesses to a smaller form termed p41, which is active only during spore germination.

The enzyme catalyses Endopeptidase action with P4 Glu or Asp, P1 preferably Glu &gt; Asp, P1' hydrophobic and P2' Ala.. In terms of biological role, initiates the rapid degradation of small, acid-soluble proteins during spore germination. This is Germination protease from Bacillus pumilus (strain SAFR-032).